A 140-amino-acid chain; its full sequence is 3-hydroxyacyl-[acyl-carrier-protein] dehydratase FabZ (140 aa).

His-48 is an active-site residue.

Belongs to the thioester dehydratase family. FabZ subfamily.

Its subcellular location is the cytoplasm. It carries out the reaction a (3R)-hydroxyacyl-[ACP] = a (2E)-enoyl-[ACP] + H2O. In terms of biological role, involved in unsaturated fatty acids biosynthesis. Catalyzes the dehydration of short chain beta-hydroxyacyl-ACPs and long chain saturated and unsaturated beta-hydroxyacyl-ACPs. This chain is 3-hydroxyacyl-[acyl-carrier-protein] dehydratase FabZ, found in Caldicellulosiruptor bescii (strain ATCC BAA-1888 / DSM 6725 / KCTC 15123 / Z-1320) (Anaerocellum thermophilum).